A 308-amino-acid polypeptide reads, in one-letter code: Glycine--tRNA ligase alpha subunit (308 aa).

The protein belongs to the class-II aminoacyl-tRNA synthetase family. Tetramer of two alpha and two beta subunits.

It is found in the cytoplasm. The catalysed reaction is tRNA(Gly) + glycine + ATP = glycyl-tRNA(Gly) + AMP + diphosphate. This Streptococcus pyogenes serotype M3 (strain SSI-1) protein is Glycine--tRNA ligase alpha subunit.